Here is a 219-residue protein sequence, read N- to C-terminus: Large ribosomal subunit protein uL3 (219 aa).

This sequence belongs to the universal ribosomal protein uL3 family. As to quaternary structure, part of the 50S ribosomal subunit. Forms a cluster with proteins L14 and L19.

Its function is as follows. One of the primary rRNA binding proteins, it binds directly near the 3'-end of the 23S rRNA, where it nucleates assembly of the 50S subunit. This Salinispora arenicola (strain CNS-205) protein is Large ribosomal subunit protein uL3.